A 59-amino-acid chain; its full sequence is uncharacterized protein (59 aa).

This is an uncharacterized protein from Rickettsia conorii (strain ATCC VR-613 / Malish 7).